Consider the following 55-residue polypeptide: Conotoxin Cal22d (55 aa).

A propeptide spanning residues 1-5 (GRPSA) is cleaved from the precursor.

Post-translationally, contains 4 disulfide bonds. As to expression, expressed by the venom duct.

The protein localises to the secreted. Its function is as follows. Probable neurotoxin with unknown target. Possibly targets ion channels. The chain is Conotoxin Cal22d from Californiconus californicus (California cone).